We begin with the raw amino-acid sequence, 219 residues long: Putative GEM-like protein 8 (219 aa).

A GRAM domain is found at 96-174 (KIYKRLFKVS…CKINGVNQSQ (79 aa)).

This sequence belongs to the GEM family.

The polypeptide is Putative GEM-like protein 8 (Arabidopsis thaliana (Mouse-ear cress)).